The primary structure comprises 324 residues: MNKIVLYLLIYVGTFSAAYDLLKAPSYFEDFLHNFNKNYSSKSEKLHRFKIFQHNLEEIINKNLNDTSAQYEINKFSDLSKDETISKYTGLSLPLQNQNFCEVVVLNRPPDKGPLEFDWRRLNKVTSVKNQGTCGACWAFATLGSLESQFAIKHDQLINLSEQQLIDCDFVDMGCDGGLLHTAYEAVMNMGGIQAENDYPYEANNGDCRLNAAKFVVKVKKCYRYVLMFEEKLKDLLRIVGPLPVAIDASDIVNYKRGVIRYCANHGLNHAVLLVGYAVENGVPFWILKNTWGTDWGEQGYFRVQQNINACGIQNELPSSAEIY.

Residues 1–18 form the signal peptide; sequence MNKIVLYLLIYVGTFSAA. Positions 19–113 are cleaved as a propeptide — activation peptide; the sequence is YDLLKAPSYF…VVLNRPPDKG (95 aa). Intrachain disulfides connect cysteine 134–cysteine 175, cysteine 168–cysteine 208, and cysteine 263–cysteine 311. Residue cysteine 137 is part of the active site. Asparagine 159 carries N-linked (GlcNAc...) asparagine; by host glycosylation. Active-site residues include histidine 270 and asparagine 290.

It belongs to the peptidase C1 family. Synthesized as an inactive proenzyme and activated by proteolytic removal of the inhibitory propeptide.

It catalyses the reaction Endopeptidase of broad specificity, hydrolyzing substrates of both cathepsin L and cathepsin B.. In terms of biological role, cysteine protease that plays an essential role in host liquefaction to facilitate horizontal transmission of the virus. May participate in the degradation of foreign protein expressed by the baculovirus system. This is Viral cathepsin (Vcath) from Choristoneura fumiferana defective polyhedrosis virus (Cfdef).